Consider the following 260-residue polypeptide: Phosphatidate cytidylyltransferase (260 aa).

The next 7 helical transmembrane spans lie at 9-29 (IIAL…LMLF), 46-66 (MIKL…IIML), 70-90 (AGDW…FILL), 102-122 (FMDA…FMYF), 130-150 (LHYI…AYIF), 172-192 (FIGG…FVDF), and 196-216 (IWLL…GDLV).

This sequence belongs to the CDS family.

The protein resides in the cell membrane. The catalysed reaction is a 1,2-diacyl-sn-glycero-3-phosphate + CTP + H(+) = a CDP-1,2-diacyl-sn-glycerol + diphosphate. It functions in the pathway phospholipid metabolism; CDP-diacylglycerol biosynthesis; CDP-diacylglycerol from sn-glycerol 3-phosphate: step 3/3. The chain is Phosphatidate cytidylyltransferase (cdsA) from Staphylococcus haemolyticus (strain JCSC1435).